The following is a 200-amino-acid chain: 6,7-dimethyl-8-ribityllumazine synthase (200 aa).

5-amino-6-(D-ribitylamino)uracil-binding positions include tryptophan 25, 59–61, and 119–121; these read SWE and VLI. 124–125 lines the (2S)-2-hydroxy-3-oxobutyl phosphate pocket; sequence ET. The Proton donor role is filled by histidine 127. Phenylalanine 152 is a binding site for 5-amino-6-(D-ribitylamino)uracil. (2S)-2-hydroxy-3-oxobutyl phosphate is bound at residue arginine 166.

The protein belongs to the DMRL synthase family. In terms of assembly, homopentamer.

The enzyme catalyses (2S)-2-hydroxy-3-oxobutyl phosphate + 5-amino-6-(D-ribitylamino)uracil = 6,7-dimethyl-8-(1-D-ribityl)lumazine + phosphate + 2 H2O + H(+). It functions in the pathway cofactor biosynthesis; riboflavin biosynthesis; riboflavin from 2-hydroxy-3-oxobutyl phosphate and 5-amino-6-(D-ribitylamino)uracil: step 1/2. Its function is as follows. Catalyzes the formation of 6,7-dimethyl-8-ribityllumazine by condensation of 5-amino-6-(D-ribitylamino)uracil with 3,4-dihydroxy-2-butanone 4-phosphate. This is the penultimate step in the biosynthesis of riboflavin. The protein is 6,7-dimethyl-8-ribityllumazine synthase of Pyricularia oryzae (strain 70-15 / ATCC MYA-4617 / FGSC 8958) (Rice blast fungus).